The sequence spans 107 residues: Age-related maculopathy susceptibility protein 2 (107 aa).

The interval 1 to 21 is disordered; that stretch reads MLRLYPGPMVTEAEGKGGPEM.

Detected in retina and placenta.

The protein resides in the cytoplasm. The polypeptide is Age-related maculopathy susceptibility protein 2 (ARMS2) (Homo sapiens (Human)).